Here is a 90-residue protein sequence, read N- to C-terminus: Cell division topological specificity factor 2 (90 aa).

Belongs to the MinE family.

In terms of biological role, prevents the cell division inhibition by proteins MinC and MinD at internal division sites while permitting inhibition at polar sites. This ensures cell division at the proper site by restricting the formation of a division septum at the midpoint of the long axis of the cell. The protein is Cell division topological specificity factor 2 of Syntrophomonas wolfei subsp. wolfei (strain DSM 2245B / Goettingen).